A 296-amino-acid polypeptide reads, in one-letter code: MKIRVGSRESKLAVKQSEIVIEAIRKYDPNIEIELVTMKTTGDIKLDQTLDKIGGKGLFIKELDQALYDDRVDITVHSFKDMPMAIDEYLPIVAVSKREDPRDVLVLPKTVKEPDFSKPIGCSSFRRKIQLQEIYPHCSVEPIRGNVLTRLEKLDRGEFSAITLALAGLKRLGLEERISRIFEVTEILPAACQGVIVVQARKGFDVSFLSDFHDKEAWDISMAERSFVRTLNGGCSSPVAAYGEIKDNYLTLTGLYVDSSNSVHKKTITGARKQGEEMGFNLALQMKGEDEVHGKD.

An S-(dipyrrolylmethanemethyl)cysteine modification is found at cysteine 235.

The protein belongs to the HMBS family. In terms of assembly, monomer. Dipyrromethane is required as a cofactor.

The enzyme catalyses 4 porphobilinogen + H2O = hydroxymethylbilane + 4 NH4(+). The protein operates within porphyrin-containing compound metabolism; protoporphyrin-IX biosynthesis; coproporphyrinogen-III from 5-aminolevulinate: step 2/4. Tetrapolymerization of the monopyrrole PBG into the hydroxymethylbilane pre-uroporphyrinogen in several discrete steps. The sequence is that of Porphobilinogen deaminase from Alkaliphilus oremlandii (strain OhILAs) (Clostridium oremlandii (strain OhILAs)).